Here is a 708-residue protein sequence, read N- to C-terminus: Fatty acid oxidation complex subunit alpha (708 aa).

Residues Met1–Pro190 are enoyl-CoA hydratase. Residues Gln310–Ser708 form a 3-hydroxyacyl-CoA dehydrogenase region.

This sequence in the N-terminal section; belongs to the enoyl-CoA hydratase/isomerase family. In the central section; belongs to the 3-hydroxyacyl-CoA dehydrogenase family. Heterotetramer of two alpha chains (FadJ) and two beta chains (FadI).

The protein localises to the cytoplasm. It carries out the reaction a (3S)-3-hydroxyacyl-CoA = a (2E)-enoyl-CoA + H2O. The catalysed reaction is a 4-saturated-(3S)-3-hydroxyacyl-CoA = a (3E)-enoyl-CoA + H2O. The enzyme catalyses a (3S)-3-hydroxyacyl-CoA + NAD(+) = a 3-oxoacyl-CoA + NADH + H(+). It catalyses the reaction (3S)-3-hydroxybutanoyl-CoA = (3R)-3-hydroxybutanoyl-CoA. It functions in the pathway lipid metabolism; fatty acid beta-oxidation. Functionally, catalyzes the formation of a hydroxyacyl-CoA by addition of water on enoyl-CoA. Also exhibits 3-hydroxyacyl-CoA epimerase and 3-hydroxyacyl-CoA dehydrogenase activities. The chain is Fatty acid oxidation complex subunit alpha from Shewanella halifaxensis (strain HAW-EB4).